The primary structure comprises 265 residues: Synaptoporin (265 aa).

The Cytoplasmic portion of the chain corresponds to 1 to 4 (MCMV). Residues 1-202 (MCMVIFAPLF…NIWFVFKETG (202 aa)) form the MARVEL domain. A helical transmembrane segment spans residues 5–25 (IFAPLFAIFAFATCGGYSGGL). The Vesicular segment spans residues 26–81 (RLSVDCVNKTESNLSIDIAFAYPFRLHQVTFEVPTCEGKERQKLALIGDSSSSAEF). Residues asparagine 33 and asparagine 38 are each glycosylated (N-linked (GlcNAc...) asparagine). The chain crosses the membrane as a helical span at residues 82–102 (FVTVAVFAFLYSLAATVVYIF). The Cytoplasmic portion of the chain corresponds to 103–114 (FQNKYRENNRGP). A helical membrane pass occupies residues 115-135 (LIDFIVTVVFSFLWLVGSSAW). Over 136–177 (AKGLSDVKVATDPKEVLLLMSACKQPSNKCMAIHSPVMSSLN) the chain is Vesicular. The helical transmembrane segment at 178–198 (TSVVFGFLNFILWAGNIWFVF) threads the bilayer. Topologically, residues 199 to 265 (KETGWHSSGQ…TGPTSFTNQI (67 aa)) are cytoplasmic. Tandem repeats lie at residues 210 to 214 (YLSDP), 222 to 226 (YNQGG), 227 to 231 (YNQDS), 232 to 236 (YGSSS), and 238 to 242 (YSQQA). Positions 210–242 (YLSDPMEKHSSSYNQGGYNQDSYGSSSGYSQQA) are 5 X approximate repeats. Serine 212 is subject to Phosphoserine. Residues 221–265 (SYNQGGYNQDSYGSSSGYSQQASLGPTSDEFGQQPTGPTSFTNQI) form a disordered region. Positions 224-243 (QGGYNQDSYGSSSGYSQQAS) are enriched in low complexity. Over residues 244–265 (LGPTSDEFGQQPTGPTSFTNQI) the composition is skewed to polar residues.

Belongs to the synaptophysin/synaptobrevin family.

It localises to the cytoplasmic vesicle. Its subcellular location is the secretory vesicle. It is found in the synaptic vesicle membrane. The protein localises to the synapse. The protein resides in the synaptosome. In terms of biological role, intrinsic membrane protein of small synaptic vesicles. Probable vesicular channel protein. This chain is Synaptoporin (SYNPR), found in Homo sapiens (Human).